Consider the following 700-residue polypeptide: Methionine--tRNA ligase (700 aa).

Positions 16 to 26 (PYANGAFHVGH) match the 'HIGH' region motif. 4 residues coordinate Zn(2+): C148, C151, C161, and C164. Residues 337-341 (KMSKS) carry the 'KMSKS' region motif. ATP is bound at residue K340. The tRNA-binding domain occupies 594–700 (DFAKIDLRIA…PGAEPGMRVG (107 aa)).

This sequence belongs to the class-I aminoacyl-tRNA synthetase family. MetG type 1 subfamily. In terms of assembly, homodimer. Zn(2+) is required as a cofactor.

The protein resides in the cytoplasm. It catalyses the reaction tRNA(Met) + L-methionine + ATP = L-methionyl-tRNA(Met) + AMP + diphosphate. Its function is as follows. Is required not only for elongation of protein synthesis but also for the initiation of all mRNA translation through initiator tRNA(fMet) aminoacylation. This chain is Methionine--tRNA ligase, found in Janthinobacterium sp. (strain Marseille) (Minibacterium massiliensis).